The following is a 79-amino-acid chain: MRSAVVVALLVMVAMSLQLTAAQEDLKYFEREVVAELAAQILRVAQGPSAFVAGPHKRNSELINSLLGIPKVMNDAGRR.

The signal sequence occupies residues 1 to 22 (MRSAVVVALLVMVAMSLQLTAA). Alanine 76 is modified (alanine amide).

It belongs to the arthropod PDH family. As to expression, eyestalk.

The protein localises to the secreted. In terms of biological role, the pigment-dispersing hormone causes the migration of the distal retinal pigment into the proximal end of the pigment chromatophore cells and thus decreases the amount of light entering the retinulas. May also function as a neurotransmitter and/or neuromodulator. The chain is Pigment-dispersing hormone type 1 (PDH1) from Penaeus vannamei (Whiteleg shrimp).